A 240-amino-acid polypeptide reads, in one-letter code: ATP-dependent dethiobiotin synthetase BioD 1 (240 aa).

Asp-13–Val-18 is an ATP binding site. Thr-17 serves as a coordination point for Mg(2+). Lys-38 is a catalytic residue. Residue Ser-42 coordinates substrate. Residues Asp-55, Glu-116–Gly-119, Asn-176–Glu-177, Pro-205–Leu-207, and Glu-212 contribute to the ATP site. Asp-55 and Glu-116 together coordinate Mg(2+).

This sequence belongs to the dethiobiotin synthetase family. As to quaternary structure, homodimer. Mg(2+) serves as cofactor.

It localises to the cytoplasm. It catalyses the reaction (7R,8S)-7,8-diammoniononanoate + CO2 + ATP = (4R,5S)-dethiobiotin + ADP + phosphate + 3 H(+). Its pathway is cofactor biosynthesis; biotin biosynthesis; biotin from 7,8-diaminononanoate: step 1/2. Functionally, catalyzes a mechanistically unusual reaction, the ATP-dependent insertion of CO2 between the N7 and N8 nitrogen atoms of 7,8-diaminopelargonic acid (DAPA, also called 7,8-diammoniononanoate) to form a ureido ring. This Yersinia pestis protein is ATP-dependent dethiobiotin synthetase BioD 1.